A 2963-amino-acid polypeptide reads, in one-letter code: tRNA nuclease CdiA (2963 aa).

Positions 1-29 are cleaved as a signal peptide; sequence MIPIYLRQKLISYALIYLVAIQPIMPVMA. The interval 35–320 is two-partner system transport domain (TPS); sequence AQGSTALDKA…AQGNITLNSH (286 aa). Positions 573–1074 are FHA-1; the sequence is GNVVAQEHAQ…MVLNTASLLN (502 aa). Residues 1075–1342 form a receptor binding domain (RBD) region; the sequence is RRDGFSVTEK…KPLTRAQLSD (268 aa). The segment at 1343–1528 is YP domain; sequence YPLPDSNNGL…LAKAEQAHLQ (186 aa). Residues 1529–1751 are periplasmic FHA-1 repeat (pFR); that stretch reads GSVISGNKVE…ATLQAERDVN (223 aa). The span at 1759–1770 shows a compositional bias: basic and acidic residues; it reads TRNQHIDSEDKT. Disordered stretches follow at residues 1759–1787 and 1992–2012; these read TRNQHIDSEDKTTGYTRSTLSSGGDLTAS and SKSSRQQINQEGSKQSESASA. The interval 1762 to 2314 is FHA-2; the sequence is QHIDSEDKTT…DSDNYNSIQK (553 aa). The span at 1771–1782 shows a compositional bias: polar residues; sequence TGYTRSTLSSGG. The short motif at 2694–2697 is the VEDN CT cleavage motif element; that stretch reads VEDN. The interval 2694 to 2963 is C-terminal effector domain (CT); that stretch reads VEDNNLSFGK…TGRVRNFHPN (270 aa).

It in the N-terminal section; belongs to the CdiA toxin family. This sequence in the C-terminal section; belongs to the bacterial EndoU family. In terms of assembly, forms a 1:1 complex with cognate immunity protein CdiI.

Its subcellular location is the secreted. It localises to the target cell. It is found in the target cell cytoplasm. Functionally, toxic component of a toxin-immunity protein module, which functions as a cellular contact-dependent growth inhibition (CDI) system. CDI modules allow bacteria to communicate with and inhibit the growth of closely related neighboring bacteria in a contact-dependent fashion. Targeting of the CT domain (residues 2824-2963) in the absence of immunity protein inhibits cell growth and causes tRNA(UUC-Glu) cleavage in the anticodon loop; expression of cognate immunity protein CdiI-43969 neutralizes growth inhibition and tRNA(UUC-Glu) remains intact, whereas non-cognate immunity proteins do not confer protection from the toxic effects. In terms of biological role, the CdiA protein is thought to be exported from the cell through the central lumen of CdiB, the other half of its two-partner system (TPS). The TPS domain probably remains associated with CdiB while the FHA-1 domain forms an extended filament with the receptor-binding domain (RBD) at its extremity; in the secretion arrested state the C-terminus of the RBD and YP domains form a hairpin-like structure as the FHA-2, PT and CT domains are periplasmic. The YP domain is probably responsible for this arrest at the point where it re-enters the host cell periplasm. Upon binding to a target cell outer membrane receptor a signal is transmitted to activate secretion. The filament elongates slightly, the rest of CdiA is secreted and the FHA-2 domain becomes stably associated with the target cell's outer membrane where it facilitates entry of the toxic CT domain into the target cell periplasm. From there the toxic CT domain is cleaved and gains access to the target cell cytoplasm via an inner membrane protein. The polypeptide is tRNA nuclease CdiA (Yersinia mollaretii (strain ATCC 43969 / DSM 18520 / CIP 103324 / CNY 7263 / WAIP 204)).